The following is a 197-amino-acid chain: 5'-deoxynucleotidase YPTB2590 (197 aa).

Substrate contacts are provided by residues 16–17 (RW) and H31. Residues 28–140 (VSEHSLQVAF…VKQADALCAY (113 aa)) form the HD domain. A divalent metal cation is bound by residues H31, H66, and D67. Substrate is bound by residues D67, 75–78 (DLPT), and D135. D135 lines the a divalent metal cation pocket.

Belongs to the 5DNU family. In terms of assembly, homodimer. A divalent metal cation serves as cofactor.

The protein resides in the cytoplasm. The catalysed reaction is a 2'-deoxyribonucleoside 5'-phosphate + H2O = a 2'-deoxyribonucleoside + phosphate. Catalyzes the strictly specific dephosphorylation of 2'-deoxyribonucleoside 5'-monophosphates. This Yersinia pseudotuberculosis serotype I (strain IP32953) protein is 5'-deoxynucleotidase YPTB2590.